We begin with the raw amino-acid sequence, 325 residues long: D-alanine--D-alanine ligase (325 aa).

The ATP-grasp domain maps to 102–300 (KQIFRAAGIP…FTELVERMLQ (199 aa)). 130 to 185 (AAELGSPLVIKPSNNGSTVGISIVRDERSFAQGLELARSVSSRIFLERYVPGKEIT) is a binding site for ATP. Residues Asp254, Glu267, and Asn269 each contribute to the Mg(2+) site.

It belongs to the D-alanine--D-alanine ligase family. Mg(2+) is required as a cofactor. Mn(2+) serves as cofactor.

It localises to the cytoplasm. The enzyme catalyses 2 D-alanine + ATP = D-alanyl-D-alanine + ADP + phosphate + H(+). It participates in cell wall biogenesis; peptidoglycan biosynthesis. Functionally, cell wall formation. The sequence is that of D-alanine--D-alanine ligase from Synechococcus sp. (strain JA-2-3B'a(2-13)) (Cyanobacteria bacterium Yellowstone B-Prime).